The primary structure comprises 378 residues: Quinolinate synthase (378 aa).

Iminosuccinate is bound by residues H59 and S80. C125 is a [4Fe-4S] cluster binding site. Iminosuccinate-binding positions include 151–153 and S168; that span reads YAN. C212 is a [4Fe-4S] cluster binding site. Residues 238–240 and T255 contribute to the iminosuccinate site; that span reads HPE. A [4Fe-4S] cluster-binding site is contributed by C309.

The protein belongs to the quinolinate synthase family. Type 1 subfamily. It depends on [4Fe-4S] cluster as a cofactor.

It localises to the cytoplasm. The catalysed reaction is iminosuccinate + dihydroxyacetone phosphate = quinolinate + phosphate + 2 H2O + H(+). It participates in cofactor biosynthesis; NAD(+) biosynthesis; quinolinate from iminoaspartate: step 1/1. Its function is as follows. Catalyzes the condensation of iminoaspartate with dihydroxyacetone phosphate to form quinolinate. The polypeptide is Quinolinate synthase (Burkholderia lata (strain ATCC 17760 / DSM 23089 / LMG 22485 / NCIMB 9086 / R18194 / 383)).